The following is a 485-amino-acid chain: Cysteine--tRNA ligase (485 aa).

C27 serves as a coordination point for Zn(2+). A 'HIGH' region motif is present at residues 29-39; that stretch reads ITAYDLCHIGH. Positions 208, 233, and 237 each coordinate Zn(2+). A 'KMSKS' region motif is present at residues 265–269; sequence KMSKS. ATP is bound at residue K268.

It belongs to the class-I aminoacyl-tRNA synthetase family. As to quaternary structure, monomer. It depends on Zn(2+) as a cofactor.

The protein localises to the cytoplasm. It catalyses the reaction tRNA(Cys) + L-cysteine + ATP = L-cysteinyl-tRNA(Cys) + AMP + diphosphate. The polypeptide is Cysteine--tRNA ligase (Nitratidesulfovibrio vulgaris (strain DP4) (Desulfovibrio vulgaris)).